Here is a 341-residue protein sequence, read N- to C-terminus: Protein CbhE (341 aa).

Residues 287 to 297 show a composition bias toward acidic residues; it reads IDEENTSDSSE. The segment at 287 to 341 is disordered; the sequence is IDEENTSDSSEEGTSKNRFRDTLFSNVPDSSSDSENEQEREKKELAGKTPSFRLC. The span at 323 to 332 shows a compositional bias: basic and acidic residues; that stretch reads EQEREKKELA.

The protein resides in the cytoplasm. May be involved in the pathogenesis of acute Q fever. This chain is Protein CbhE (cbhE), found in Coxiella burnetii (strain RSA 493 / Nine Mile phase I).